Reading from the N-terminus, the 567-residue chain is Multidrug and toxin extrusion protein 1 (567 aa).

Met1 is modified (N-acetylmethionine). Residues 1–37 are Cytoplasmic-facing; it reads MERTEESAPGPGGADAASERRGLRCLLLPGFLEELRA. At Ser18 the chain carries Phosphoserine. The chain crosses the membrane as a helical span at residues 38–58; it reads LLVLAGPAFLAQLMMFLISFI. Residues 59-72 are Extracellular-facing; sequence SSVFCGHLGKLELD. A helical membrane pass occupies residues 73 to 93; the sequence is AVTLAIAVINVTGISVGHGLS. The Cytoplasmic segment spans residues 94–120; it reads SACDTLISQTYGSQNLKHVGVILQRGT. The helical transmembrane segment at 121-141 threads the bilayer; sequence LILLLCCFPCWALFINTEQIL. Residues 142–152 are Extracellular-facing; the sequence is LLFRQDPDVSR. The helical transmembrane segment at 153–173 threads the bilayer; the sequence is LTQTYVMIFIPALPAAFLYTL. The Cytoplasmic portion of the chain corresponds to 174–187; that stretch reads QVKYLLNQGIVLPQ. The helical transmembrane segment at 188-208 threads the bilayer; sequence IMTGIAANLVNALANYVFLYH. Residues 209–216 are Extracellular-facing; it reads LHLGVMGS. Residues 217–237 form a helical membrane-spanning segment; sequence ALANTISQFALAIFLFLYILW. The Cytoplasmic segment spans residues 238–257; the sequence is RRLHQATWGGWSWECLQDWA. A helical membrane pass occupies residues 258–277; sequence SFLRLAIPSMLMLCIEWWAY. The Extracellular portion of the chain corresponds to 278–295; sequence EVGSFLSGILGMVELGAQ. A helical membrane pass occupies residues 296–316; the sequence is SITYELAIIVYMIPSGFSVAA. At 317–336 the chain is on the cytoplasmic side; the sequence is NVRVGNALGAGNIDQAKKSS. The helical transmembrane segment at 337-357 threads the bilayer; sequence AISLIVTELFAVTFCVLLLGC. The Extracellular portion of the chain corresponds to 358 to 370; the sequence is KDLVGYIFTTDRD. A helical transmembrane segment spans residues 371–391; the sequence is IVALVAQVIPIYAVSHLFEGL. The Cytoplasmic segment spans residues 392-408; that stretch reads ACTCGGILRGTGNQKVG. The chain crosses the membrane as a helical span at residues 409–429; sequence AIVNAIGYYVIGLPIGIALMF. Topologically, residues 430-437 are extracellular; that stretch reads AAKLGVIG. The chain crosses the membrane as a helical span at residues 438 to 458; sequence LWSGIIICTTCQTTCFLAFIA. Residues 459–543 lie on the Cytoplasmic side of the membrane; it reads RLNWKRACQQ…LSGKQLALRR (85 aa). Residues 544–564 form a helical membrane-spanning segment; that stretch reads GLLLLGVVLVLVGGILVRVYI. Residues 565–567 lie on the Extracellular side of the membrane; it reads RIE.

Belongs to the multi antimicrobial extrusion (MATE) (TC 2.A.66.1) family. In terms of tissue distribution, predominantly expressed in kidney and liver. Also expressed in various cells, including brain glia-like cells and capillaries, pancreatic duct cells, urinary bladder epithelium, adrenal gland cortex, heart, stomach, small intestine, thyroid gland, testes, alpha cells of the islets of Langerhans, Leydig cells, and vitamin A-storing Ito cells. Expressed in heart, stomach, small intestine, bladder, thyroid gland, adrenal gland and testes (at protein level).

Its subcellular location is the cell membrane. It is found in the apical cell membrane. The catalysed reaction is thiamine(out) + H(+)(in) = thiamine(in) + H(+)(out). It catalyses the reaction estrone 3-sulfate(in) + H(+)(out) = estrone 3-sulfate(out) + H(+)(in). It carries out the reaction creatinine(in) + H(+)(out) = creatinine(out) + H(+)(in). The enzyme catalyses agmatine(in) + H(+)(out) = agmatine(out) + H(+)(in). Multidrug efflux pump that functions as a H(+)/organic cation antiporter. Plays a physiological role in the excretion of cationic compounds including endogenous metabolites, drugs, toxins through the kidney and liver, into urine and bile respectively. Mediates the efflux of endogenous compounds such as creatinine, vitamin B1/thiamine, agmatine and estrone-3-sulfate. May also contribute to regulate the transport of cationic compounds in testis across the blood-testis-barrier. In Mus musculus (Mouse), this protein is Multidrug and toxin extrusion protein 1 (Slc47a1).